The following is a 168-amino-acid chain: 3'-5' exoribonuclease MT2234.1 (168 aa).

Aspartate 6 is a Mg(2+) binding site. Residues 6–9 are RNA binding; sequence DTEF.

As to quaternary structure, homodimer. The cofactor is Mg(2+).

Functionally, exonuclease that cleaves single-stranded 3' overhangs of double-stranded RNA. This Mycobacterium tuberculosis (strain CDC 1551 / Oshkosh) protein is 3'-5' exoribonuclease MT2234.1.